The following is a 141-amino-acid chain: Large ribosomal subunit protein uL11 (141 aa).

This sequence belongs to the universal ribosomal protein uL11 family. As to quaternary structure, part of the ribosomal stalk of the 50S ribosomal subunit. Interacts with L10 and the large rRNA to form the base of the stalk. L10 forms an elongated spine to which L12 dimers bind in a sequential fashion forming a multimeric L10(L12)X complex. Post-translationally, one or more lysine residues are methylated.

Its function is as follows. Forms part of the ribosomal stalk which helps the ribosome interact with GTP-bound translation factors. This chain is Large ribosomal subunit protein uL11, found in Wolinella succinogenes (strain ATCC 29543 / DSM 1740 / CCUG 13145 / JCM 31913 / LMG 7466 / NCTC 11488 / FDC 602W) (Vibrio succinogenes).